We begin with the raw amino-acid sequence, 363 residues long: Dual-specificity RNA methyltransferase RlmN (363 aa).

The active-site Proton acceptor is glutamate 102. A Radical SAM core domain is found at 108–344 (EKKRSTLCVS…TTTIRKNRGE (237 aa)). An intrachain disulfide couples cysteine 115 to cysteine 350. [4Fe-4S] cluster-binding residues include cysteine 122, cysteine 126, and cysteine 129. S-adenosyl-L-methionine is bound by residues 174–175 (GE), serine 206, 228–230 (SLH), and asparagine 307. Cysteine 350 (S-methylcysteine intermediate) is an active-site residue.

Belongs to the radical SAM superfamily. RlmN family. The cofactor is [4Fe-4S] cluster.

The protein localises to the cytoplasm. It catalyses the reaction adenosine(2503) in 23S rRNA + 2 reduced [2Fe-2S]-[ferredoxin] + 2 S-adenosyl-L-methionine = 2-methyladenosine(2503) in 23S rRNA + 5'-deoxyadenosine + L-methionine + 2 oxidized [2Fe-2S]-[ferredoxin] + S-adenosyl-L-homocysteine. It carries out the reaction adenosine(37) in tRNA + 2 reduced [2Fe-2S]-[ferredoxin] + 2 S-adenosyl-L-methionine = 2-methyladenosine(37) in tRNA + 5'-deoxyadenosine + L-methionine + 2 oxidized [2Fe-2S]-[ferredoxin] + S-adenosyl-L-homocysteine. In terms of biological role, specifically methylates position 2 of adenine 2503 in 23S rRNA and position 2 of adenine 37 in tRNAs. m2A2503 modification seems to play a crucial role in the proofreading step occurring at the peptidyl transferase center and thus would serve to optimize ribosomal fidelity. The protein is Dual-specificity RNA methyltransferase RlmN of Buchnera aphidicola subsp. Acyrthosiphon pisum (strain APS) (Acyrthosiphon pisum symbiotic bacterium).